Reading from the N-terminus, the 101-residue chain is NADH-quinone oxidoreductase subunit K (101 aa).

Transmembrane regions (helical) follow at residues 4–24 (LAHF…GIFL), 30–50 (IVLL…FVAF), and 61–81 (VFVF…LAIL).

The protein belongs to the complex I subunit 4L family. NDH-1 is composed of 14 different subunits. Subunits NuoA, H, J, K, L, M, N constitute the membrane sector of the complex.

It localises to the cell inner membrane. It catalyses the reaction a quinone + NADH + 5 H(+)(in) = a quinol + NAD(+) + 4 H(+)(out). Its function is as follows. NDH-1 shuttles electrons from NADH, via FMN and iron-sulfur (Fe-S) centers, to quinones in the respiratory chain. The immediate electron acceptor for the enzyme in this species is believed to be ubiquinone. Couples the redox reaction to proton translocation (for every two electrons transferred, four hydrogen ions are translocated across the cytoplasmic membrane), and thus conserves the redox energy in a proton gradient. The sequence is that of NADH-quinone oxidoreductase subunit K from Cupriavidus necator (strain ATCC 17699 / DSM 428 / KCTC 22496 / NCIMB 10442 / H16 / Stanier 337) (Ralstonia eutropha).